A 276-amino-acid polypeptide reads, in one-letter code: Formamidopyrimidine-DNA glycosylase (276 aa).

Pro-2 (schiff-base intermediate with DNA) is an active-site residue. Catalysis depends on Glu-3, which acts as the Proton donor. The Proton donor; for beta-elimination activity role is filled by Lys-60. The DNA site is built by His-93 and Arg-112. An FPG-type zinc finger spans residues 240–274 (NVYGKKGEPCVTCGTILEKTVVGGRGTHYCPICQP). The active-site Proton donor; for delta-elimination activity is the Arg-264.

It belongs to the FPG family. In terms of assembly, monomer. It depends on Zn(2+) as a cofactor.

It catalyses the reaction Hydrolysis of DNA containing ring-opened 7-methylguanine residues, releasing 2,6-diamino-4-hydroxy-5-(N-methyl)formamidopyrimidine.. The catalysed reaction is 2'-deoxyribonucleotide-(2'-deoxyribose 5'-phosphate)-2'-deoxyribonucleotide-DNA = a 3'-end 2'-deoxyribonucleotide-(2,3-dehydro-2,3-deoxyribose 5'-phosphate)-DNA + a 5'-end 5'-phospho-2'-deoxyribonucleoside-DNA + H(+). Involved in base excision repair of DNA damaged by oxidation or by mutagenic agents. Acts as a DNA glycosylase that recognizes and removes damaged bases. Has a preference for oxidized purines, such as 7,8-dihydro-8-oxoguanine (8-oxoG). Has AP (apurinic/apyrimidinic) lyase activity and introduces nicks in the DNA strand. Cleaves the DNA backbone by beta-delta elimination to generate a single-strand break at the site of the removed base with both 3'- and 5'-phosphates. This is Formamidopyrimidine-DNA glycosylase from Bacillus cereus (strain ATCC 14579 / DSM 31 / CCUG 7414 / JCM 2152 / NBRC 15305 / NCIMB 9373 / NCTC 2599 / NRRL B-3711).